The following is a 920-amino-acid chain: Ubiquitin ligase-binding protein BUL2 (920 aa).

A compositionally biased stretch (polar residues) spans 1–10 (MTFTFSTSSR). Positions 1–89 (MTFTFSTSSR…EENSLEMDCT (89 aa)) are disordered. At Thr22 the chain carries Phosphothreonine. A compositionally biased stretch (polar residues) spans 35–57 (QQLSSNSTDNSLHPNSGQTPRAS). Residues 73–82 (DRLRQEREEN) are compositionally biased toward basic and acidic residues. The PY-motif signature appears at 129-133 (FPPSY). Ser557 carries the post-translational modification Phosphoserine.

This sequence belongs to the BUL1 family. In terms of assembly, component of the RSP5-BUL1/2 ubiquitin ligase complex composed of at least RSP5 and BUL1 or BUL2.

The protein localises to the cytoplasm. It functions in the pathway protein modification; protein ubiquitination. Component of a RSP5 ubiquitin ligase complex which specifies polyubiquitination and intracellular trafficking of the general amino acid permease GAP1 as well as other permeases such as PMA1. The RSP5-BUL1/2 complex is also necessary for the heat-shock element (HSE)-mediated gene expression, nitrogen starvation GLN3-dependent transcription and pressure-induced differential regulation of the 2 tryptophan permeases TAT1 and TAT2. In Saccharomyces cerevisiae (strain ATCC 204508 / S288c) (Baker's yeast), this protein is Ubiquitin ligase-binding protein BUL2 (BUL2).